We begin with the raw amino-acid sequence, 360 residues long: Fructose import permease protein FrcC (360 aa).

9 consecutive transmembrane segments (helical) span residues Ala-48–Gly-68, Ala-84–Val-106, Gly-125–Ile-145, Leu-155–Tyr-175, Ala-205–Leu-225, Met-254–Ile-274, Ala-284–Phe-304, Ile-310–Met-330, and Gln-335–Ile-355.

This sequence belongs to the binding-protein-dependent transport system permease family. The complex is composed of two ATP-binding proteins (FrcA), two transmembrane proteins (FrcC) and a solute-binding protein (FrcB).

Its subcellular location is the cell inner membrane. Its function is as follows. Part of the high-affinity ABC transporter complex FrcBCA involved in fructose uptake. Is also a high-affinity transporter for ribose and mannose. Responsible for the translocation of the substrate across the membrane. The polypeptide is Fructose import permease protein FrcC (Rhizobium meliloti (Ensifer meliloti)).